The following is a 111-amino-acid chain: Large ribosomal subunit protein uL22 (111 aa).

Belongs to the universal ribosomal protein uL22 family. As to quaternary structure, part of the 50S ribosomal subunit.

Functionally, this protein binds specifically to 23S rRNA; its binding is stimulated by other ribosomal proteins, e.g. L4, L17, and L20. It is important during the early stages of 50S assembly. It makes multiple contacts with different domains of the 23S rRNA in the assembled 50S subunit and ribosome. In terms of biological role, the globular domain of the protein is located near the polypeptide exit tunnel on the outside of the subunit, while an extended beta-hairpin is found that lines the wall of the exit tunnel in the center of the 70S ribosome. The sequence is that of Large ribosomal subunit protein uL22 from Clostridium acetobutylicum (strain ATCC 824 / DSM 792 / JCM 1419 / IAM 19013 / LMG 5710 / NBRC 13948 / NRRL B-527 / VKM B-1787 / 2291 / W).